Consider the following 66-residue polypeptide: DNA-directed RNA polymerase subunit Rpo10 (66 aa).

Zn(2+)-binding residues include cysteine 7, cysteine 10, cysteine 44, and cysteine 45.

The protein belongs to the archaeal Rpo10/eukaryotic RPB10 RNA polymerase subunit family. As to quaternary structure, part of the 13-subunit RNA polymerase complex. The cofactor is Zn(2+).

It is found in the cytoplasm. The catalysed reaction is RNA(n) + a ribonucleoside 5'-triphosphate = RNA(n+1) + diphosphate. Its function is as follows. DNA-dependent RNA polymerase (RNAP) catalyzes the transcription of DNA into RNA using the four ribonucleoside triphosphates as substrates. This chain is DNA-directed RNA polymerase subunit Rpo10, found in Sulfolobus acidocaldarius (strain ATCC 33909 / DSM 639 / JCM 8929 / NBRC 15157 / NCIMB 11770).